Consider the following 529-residue polypeptide: CTP synthase (529 aa).

The interval 1-267 (MKEAKFIFVT…DTQILEHFHL (267 aa)) is amidoligase domain. Residue Ser15 coordinates CTP. Ser15 contacts UTP. Residues 16–21 (SLGKGL) and Asp73 contribute to the ATP site. Residues Asp73 and Glu141 each coordinate Mg(2+). CTP-binding positions include 148–150 (DIE), 188–193 (KTKPTQ), and Lys224. Residues 188–193 (KTKPTQ) and Lys224 contribute to the UTP site. The Glutamine amidotransferase type-1 domain occupies 292 to 529 (TVSIVGKYTE…SFVKAAIDKK (238 aa)). An L-glutamine-binding site is contributed by Gly354. Cys381 serves as the catalytic Nucleophile; for glutamine hydrolysis. L-glutamine is bound by residues 382-385 (LGMQ), Glu405, and Arg459. Active-site residues include His504 and Glu506.

This sequence belongs to the CTP synthase family. As to quaternary structure, homotetramer.

The catalysed reaction is UTP + L-glutamine + ATP + H2O = CTP + L-glutamate + ADP + phosphate + 2 H(+). It carries out the reaction L-glutamine + H2O = L-glutamate + NH4(+). The enzyme catalyses UTP + NH4(+) + ATP = CTP + ADP + phosphate + 2 H(+). It functions in the pathway pyrimidine metabolism; CTP biosynthesis via de novo pathway; CTP from UDP: step 2/2. With respect to regulation, allosterically activated by GTP, when glutamine is the substrate; GTP has no effect on the reaction when ammonia is the substrate. The allosteric effector GTP functions by stabilizing the protein conformation that binds the tetrahedral intermediate(s) formed during glutamine hydrolysis. Inhibited by the product CTP, via allosteric rather than competitive inhibition. Functionally, catalyzes the ATP-dependent amination of UTP to CTP with either L-glutamine or ammonia as the source of nitrogen. Regulates intracellular CTP levels through interactions with the four ribonucleotide triphosphates. This is CTP synthase from Wolbachia pipientis wMel.